We begin with the raw amino-acid sequence, 153 residues long: Nucleoside diphosphate kinase (153 aa).

ATP contacts are provided by lysine 12, phenylalanine 60, arginine 88, threonine 94, arginine 105, and asparagine 115. Histidine 118 functions as the Pros-phosphohistidine intermediate in the catalytic mechanism.

Belongs to the NDK family. Mg(2+) serves as cofactor.

It localises to the cytoplasm. It carries out the reaction a 2'-deoxyribonucleoside 5'-diphosphate + ATP = a 2'-deoxyribonucleoside 5'-triphosphate + ADP. It catalyses the reaction a ribonucleoside 5'-diphosphate + ATP = a ribonucleoside 5'-triphosphate + ADP. Its function is as follows. Major role in the synthesis of nucleoside triphosphates other than ATP. The ATP gamma phosphate is transferred to the NDP beta phosphate via a ping-pong mechanism, using a phosphorylated active-site intermediate. This is Nucleoside diphosphate kinase from Natronomonas pharaonis (strain ATCC 35678 / DSM 2160 / CIP 103997 / JCM 8858 / NBRC 14720 / NCIMB 2260 / Gabara) (Halobacterium pharaonis).